Reading from the N-terminus, the 601-residue chain is Elongation factor 4 (601 aa).

A tr-type G domain is found at 7 to 189 (SNVRNFSIVA…AIVTRLPPPK (183 aa)). GTP is bound by residues 19–24 (DHGKST) and 136–139 (NKVD).

Belongs to the TRAFAC class translation factor GTPase superfamily. Classic translation factor GTPase family. LepA subfamily.

It is found in the cell inner membrane. The catalysed reaction is GTP + H2O = GDP + phosphate + H(+). Its function is as follows. Required for accurate and efficient protein synthesis under certain stress conditions. May act as a fidelity factor of the translation reaction, by catalyzing a one-codon backward translocation of tRNAs on improperly translocated ribosomes. Back-translocation proceeds from a post-translocation (POST) complex to a pre-translocation (PRE) complex, thus giving elongation factor G a second chance to translocate the tRNAs correctly. Binds to ribosomes in a GTP-dependent manner. The protein is Elongation factor 4 of Afipia carboxidovorans (strain ATCC 49405 / DSM 1227 / KCTC 32145 / OM5) (Oligotropha carboxidovorans).